The primary structure comprises 816 residues: MESRVLLRTFCLLFGLGAVWGLGVDPSLQIDVLTELELGESTTGVRQVPGLHNGTKAFLFQDTPRSIKASTATAEQFFQKLRNKHEFTILVTLKQTHLNSGVILSIHHLDHRYLELESSGHRNEVRLHYRSGSHHPHTEVFPYILADDKWHKLSLAISASHLILHIDCNKIYERVVEKPSTDLPLGTSFWLGQRNNAHGYFKGIMQDVQLLVMPQGFIAQCPDLNRTCPTCNDFHGLVQKIMELQDILAKTSAKLSRAEQRMNRLDQCYCERTCTMKGTTYREFESWTDGCKNCTCLNGTIQCETLICPNPDCPLKSAPAYVDGKCCKECKSICQFQGRTYFEGQRNTVYSSSGVCVLYECKDQSMKLVESSGCPALDCAESHQITLSHSCCKVCKGYDFCSERHNCMENSVCRNLNDRAVCSCRDGFRALREDNAYCEDIDECAEGRHYCRENTMCVNTPGSFMCICKTGYIRIDDYSCTEHDECVTNQHNCDENALCFNTVGGHNCVCKPGYTGNGTTCKAFCQDGCRNGGACIAANVCACPQGFTGHSCETDIDECSDGFVQCDSRANCINLPGWYHCECRDGYHDNGMFSPSGESCEDIDECGTGRHSCANDTICFNLDGGYDCRCPHGKNCTGDCIHDGKIKHNGQIWVLENDRCSVCSCQNGFVMCRRMVCDCENPTVDLFCCPECDPRLSSQCLHQNGETLYNSGDTWVQNCQQCRCLQGEVDCWPLPCPEVECEFSVLPENECCPRCVTDPCQADTIRNDITKTCLDEMNVVRFTGSSWIKHGTECTLCQCKNGHICCSVDPQCLQEL.

Residues 1–21 form the signal peptide; that stretch reads MESRVLLRTFCLLFGLGAVWG. The region spanning 30–258 is the Laminin G-like domain; that stretch reads IDVLTELELG…AKTSAKLSRA (229 aa). Residues asparagine 53, asparagine 225, asparagine 293, and asparagine 298 are each glycosylated (N-linked (GlcNAc...) asparagine). The 60-residue stretch at 272–331 folds into the VWFC 1 domain; that stretch reads RTCTMKGTTYREFESWTDGCKNCTCLNGTIQCETLICPNPDCPLKSAPAYVDGKCCKECK. Residues 397–439 enclose the EGF-like 1 domain; that stretch reads GYDFCSERHNCMENSVCRNLNDRAVCSCRDGFRALREDNAYCE. Disulfide bonds link cysteine 401/cysteine 413, cysteine 407/cysteine 422, and cysteine 424/cysteine 438. 3 residues coordinate Ca(2+): aspartate 440, isoleucine 441, and glutamate 443. The region spanning 440-481 is the EGF-like 2; calcium-binding domain; sequence DIDECAEGRHYCRENTMCVNTPGSFMCICKTGYIRIDDYSCT. Disulfide bonds link cysteine 444/cysteine 457, cysteine 451/cysteine 466, cysteine 468/cysteine 480, cysteine 486/cysteine 499, cysteine 493/cysteine 508, cysteine 510/cysteine 521, cysteine 525/cysteine 535, cysteine 529/cysteine 541, and cysteine 543/cysteine 552. Positions 459, 460, and 463 each coordinate Ca(2+). In terms of domain architecture, EGF-like 3; calcium-binding spans 482–522; it reads EHDECVTNQHNCDENALCFNTVGGHNCVCKPGYTGNGTTCK. N-linked (GlcNAc...) asparagine glycosylation is present at asparagine 517. One can recognise an EGF-like 4 domain in the interval 523 to 553; that stretch reads AFCQDGCRNGGACIAANVCACPQGFTGHSCE. O-linked (GlcNAc...) threonine glycosylation occurs at threonine 548. Ca(2+) contacts are provided by aspartate 555, isoleucine 556, and glutamate 558. The region spanning 555 to 601 is the EGF-like 5; calcium-binding domain; the sequence is DIDECSDGFVQCDSRANCINLPGWYHCECRDGYHDNGMFSPSGESCE. Cystine bridges form between cysteine 559/cysteine 572, cysteine 566/cysteine 581, and cysteine 583/cysteine 600. Residues asparagine 574, leucine 575, and tryptophan 578 each contribute to the Ca(2+) site. Ca(2+)-binding residues include aspartate 602, isoleucine 603, and glutamate 605. The EGF-like 6; calcium-binding domain occupies 602–637; it reads DIDECGTGRHSCANDTICFNLDGGYDCRCPHGKNCT. Cystine bridges form between cysteine 606/cysteine 619, cysteine 613/cysteine 628, and cysteine 630/cysteine 636. The N-linked (GlcNAc...) asparagine glycan is linked to asparagine 615. Ca(2+) contacts are provided by asparagine 621, leucine 622, and glycine 625. Asparagine 635 carries N-linked (GlcNAc...) asparagine glycosylation. VWFC domains are found at residues 638–693 and 698–756; these read GDCI…PECD and SQCL…PRCV.

Homotrimer. Binds to PRKCB. Interacts with NICOL1; this interaction triggers epididymal differentiation.

It is found in the secreted. Its function is as follows. Plays multiple roles in neural tissues, regulates neuronal proliferation, survival, differentiation, polarization, as well as axon guidance and synaptic functions. Plays an important role in axon development during neuronal differentiation through the MAPK intracellular signaling pathway. Via binding to its receptor ROBO3, plays a role in axon guidance, functions as a repulsive guidance cue for commissural axons, helping to steer them across the spinal cord midline. Required for neuron survival through the modulation of MAPK signaling pathways too. Involved in the regulation of hypothalamic GNRH secretion and the control of puberty. In terms of biological role, testicular luminal protein that signals through a ROS1-pathway to regulate the epididymal initial segment (IS) maturation, sperm maturation and male fertility. This is Protein kinase C-binding protein NELL2 (NELL2) from Bos taurus (Bovine).